The chain runs to 123 residues: Large ribosomal subunit protein uL18 (123 aa).

The protein belongs to the universal ribosomal protein uL18 family. As to quaternary structure, part of the 50S ribosomal subunit; part of the 5S rRNA/L5/L18/L25 subcomplex. Contacts the 5S and 23S rRNAs.

This is one of the proteins that bind and probably mediate the attachment of the 5S RNA into the large ribosomal subunit, where it forms part of the central protuberance. In Wolbachia pipientis wMel, this protein is Large ribosomal subunit protein uL18.